Here is a 374-residue protein sequence, read N- to C-terminus: Putative zinc finger MYND domain-containing protein R331 (374 aa).

Positions 328, 331, 341, 344, 350, 354, 362, and 366 each coordinate Zn(2+). The MYND-type zinc-finger motif lies at 328-366 (CFYCNKNIEKPVVCNKCFRIKYCSEKCQSEYNSYHSDDC).

The sequence is that of Putative zinc finger MYND domain-containing protein R331 from Acanthamoeba polyphaga (Amoeba).